An 873-amino-acid polypeptide reads, in one-letter code: Alanine--tRNA ligase (873 aa).

4 residues coordinate Zn(2+): His-562, His-566, Cys-663, and His-667.

The protein belongs to the class-II aminoacyl-tRNA synthetase family. It depends on Zn(2+) as a cofactor.

Its subcellular location is the cytoplasm. It carries out the reaction tRNA(Ala) + L-alanine + ATP = L-alanyl-tRNA(Ala) + AMP + diphosphate. Functionally, catalyzes the attachment of alanine to tRNA(Ala) in a two-step reaction: alanine is first activated by ATP to form Ala-AMP and then transferred to the acceptor end of tRNA(Ala). Also edits incorrectly charged Ser-tRNA(Ala) and Gly-tRNA(Ala) via its editing domain. The sequence is that of Alanine--tRNA ligase from Bordetella avium (strain 197N).